The chain runs to 124 residues: Small ribosomal subunit protein uS13 (124 aa).

Positions 96–124 (LPVRGQRTKTNARTRKGPRRTVAGKKKAK) are disordered.

It belongs to the universal ribosomal protein uS13 family. In terms of assembly, part of the 30S ribosomal subunit. Forms a loose heterodimer with protein S19. Forms two bridges to the 50S subunit in the 70S ribosome.

In terms of biological role, located at the top of the head of the 30S subunit, it contacts several helices of the 16S rRNA. In the 70S ribosome it contacts the 23S rRNA (bridge B1a) and protein L5 of the 50S subunit (bridge B1b), connecting the 2 subunits; these bridges are implicated in subunit movement. Contacts the tRNAs in the A and P-sites. This Symbiobacterium thermophilum (strain DSM 24528 / JCM 14929 / IAM 14863 / T) protein is Small ribosomal subunit protein uS13.